Here is a 161-residue protein sequence, read N- to C-terminus: UPF0763 protein Cla_1130 (161 aa).

The protein belongs to the UPF0763 family.

The chain is UPF0763 protein Cla_1130 from Campylobacter lari (strain RM2100 / D67 / ATCC BAA-1060).